We begin with the raw amino-acid sequence, 413 residues long: Arginine biosynthesis bifunctional protein ArgJ, mitochondrial (413 aa).

Substrate is bound by residues T168, K194, T205, and E292. Catalysis depends on T205, which acts as the Nucleophile.

It belongs to the ArgJ family. Heterodimer of an alpha and a beta chain. In terms of processing, the alpha and beta chains are autoproteolytically processed from a single precursor protein within the mitochondrion.

It localises to the mitochondrion matrix. It catalyses the reaction N(2)-acetyl-L-ornithine + L-glutamate = N-acetyl-L-glutamate + L-ornithine. It carries out the reaction L-glutamate + acetyl-CoA = N-acetyl-L-glutamate + CoA + H(+). It functions in the pathway amino-acid biosynthesis; L-arginine biosynthesis; L-ornithine and N-acetyl-L-glutamate from L-glutamate and N(2)-acetyl-L-ornithine (cyclic): step 1/1. Its pathway is amino-acid biosynthesis; L-arginine biosynthesis; N(2)-acetyl-L-ornithine from L-glutamate: step 1/4. In terms of biological role, catalyzes two activities which are involved in the cyclic version of arginine biosynthesis: the synthesis of acetylglutamate from glutamate and acetyl-CoA, and of ornithine by transacetylation between acetylornithine and glutamate. The chain is Arginine biosynthesis bifunctional protein ArgJ, mitochondrial from Clavispora lusitaniae (strain ATCC 42720) (Yeast).